Here is a 104-residue protein sequence, read N- to C-terminus: NADH-quinone oxidoreductase subunit K (104 aa).

3 consecutive transmembrane segments (helical) span residues 7-27 (LSHY…GIFL), 33-53 (IVIL…LVSF), and 67-87 (LLVL…LVVF).

The protein belongs to the complex I subunit 4L family. As to quaternary structure, NDH-1 is composed of 14 different subunits. Subunits NuoA, H, J, K, L, M, N constitute the membrane sector of the complex.

The protein localises to the cell inner membrane. It carries out the reaction a quinone + NADH + 5 H(+)(in) = a quinol + NAD(+) + 4 H(+)(out). NDH-1 shuttles electrons from NADH, via FMN and iron-sulfur (Fe-S) centers, to quinones in the respiratory chain. The immediate electron acceptor for the enzyme in this species is believed to be ubiquinone. Couples the redox reaction to proton translocation (for every two electrons transferred, four hydrogen ions are translocated across the cytoplasmic membrane), and thus conserves the redox energy in a proton gradient. The sequence is that of NADH-quinone oxidoreductase subunit K from Xanthobacter autotrophicus (strain ATCC BAA-1158 / Py2).